Reading from the N-terminus, the 209-residue chain is MKNLFLTSSFKDVVPLFTEFESNLQGKTVTFIPTASTVEEVVFYVEAGKKALEKLGLFVVELDVATESLDHIAATLRKNDFIYVTGGNTFFLLQELKRTGADKLILEEIAAGKLYIGESAGAVITSPNIAYIQSMDSPKKAEQLTNYDALNLVDFCTLPHYNNIPFKKITQKIVADYTKSLKMHPISNHEAILVRDEEVITKLANGKTD.

Residues Ser119 and His160 each act as charge relay system in the active site.

The protein belongs to the peptidase S51 family.

This is an uncharacterized protein from Listeria innocua serovar 6a (strain ATCC BAA-680 / CLIP 11262).